The chain runs to 60 residues: Large ribosomal subunit protein bL32 (60 aa).

This sequence belongs to the bacterial ribosomal protein bL32 family.

The sequence is that of Large ribosomal subunit protein bL32 from Streptococcus suis (strain 05ZYH33).